A 398-amino-acid chain; its full sequence is MSISKSLVLNEIKKFSPSHIIIGYSGGVDSSVLLNISKELDIPLIAIYINHNLHRDSLKWQIHCQQTCQKYNLQFISHSLDKVPKGESFEAWASKQRMAFFQKIMQQYSKPLLLLGHHQDDQAETFLIQAIRGSGLAGLASIPHYKELHHGGVLRPLLKYSKIDIEGFAKLNNISYIYDDSNEDIKYRRNLIRNQIIPILQQVNPNISQTLSRSANICAESNNILQKLLTERLQSISQDTNLIISELIKLDDDIQKNLLHLWFKQNTQQSLKSKQIKELHLAVNNPSTGWQIDISNYYQIHIQYNQLIIKYPTTINDISKEDIISWLSKNLNEEIDLTKIVIRDRKPDDKCKYRGRNKPNKLKILFQELQIPTTERSKAKIILKDQQIIAVYPFFICG.

ATP is bound at residue 25–30 (SGGVDS).

It belongs to the tRNA(Ile)-lysidine synthase family.

It localises to the cytoplasm. It catalyses the reaction cytidine(34) in tRNA(Ile2) + L-lysine + ATP = lysidine(34) in tRNA(Ile2) + AMP + diphosphate + H(+). Functionally, ligates lysine onto the cytidine present at position 34 of the AUA codon-specific tRNA(Ile) that contains the anticodon CAU, in an ATP-dependent manner. Cytidine is converted to lysidine, thus changing the amino acid specificity of the tRNA from methionine to isoleucine. This is tRNA(Ile)-lysidine synthase from Francisella tularensis subsp. holarctica (strain OSU18).